We begin with the raw amino-acid sequence, 145 residues long: Trafficking protein particle complex subunit 1 (145 aa).

This sequence belongs to the TRAPP small subunits family. BET5 subfamily. In terms of assembly, part of the multisubunit transport protein particle (TRAPP) complex. The heterodimer TRAPPC6B-TRAPPC3 interacts with TRAPPC1 likely providing a core for TRAPP complex formation.

It is found in the golgi apparatus. It localises to the cis-Golgi network. Its subcellular location is the endoplasmic reticulum. May play a role in vesicular transport from endoplasmic reticulum to Golgi. In Mus musculus (Mouse), this protein is Trafficking protein particle complex subunit 1.